A 436-amino-acid polypeptide reads, in one-letter code: GTPase Der (436 aa).

2 consecutive EngA-type G domains span residues 4–167 (PIVA…GEEE) and 176–351 (IRLS…ENHK). Residues 10–17 (GRPNVGKS), 57–61 (DTGGI), 119–122 (NKVD), 182–189 (GRPNVGKS), 229–233 (DTAGM), and 294–297 (NKWD) each bind GTP. The KH-like domain occupies 352–436 (KRVQSSTLNE…PIHIIARKRN (85 aa)).

The protein belongs to the TRAFAC class TrmE-Era-EngA-EngB-Septin-like GTPase superfamily. EngA (Der) GTPase family. In terms of assembly, associates with the 50S ribosomal subunit.

Functionally, GTPase that plays an essential role in the late steps of ribosome biogenesis. The protein is GTPase Der of Staphylococcus aureus (strain USA300).